Here is a 345-residue protein sequence, read N- to C-terminus: Nuclear distribution protein nudE-like 1 (345 aa).

Residues 28-190 (QSFQEARDEL…LAVRERQQEV (163 aa)) are a coiled coil. Residues 56-166 (VQAEQRNRDL…LDEKESLLVS (111 aa)) form a self-association region. Residues 64–189 (DLQADNQRLK…ELAVRERQQE (126 aa)) are interaction with KATNB1. The tract at residues 114 to 133 (YVRELEQANDDLERAKRATI) is required for interaction with PAFAH1B1. The interaction with CENPF stretch occupies residues 175–345 (RDLRQELAVR…SAPGMLPLSV (171 aa)). Residues 189–256 (EVTRKSAPSS…SARISALNIV (68 aa)) are interaction with YWHAE. Residues 191–345 (TRKSAPSSPT…SAPGMLPLSV (155 aa)) form an interaction with NEFL region. Positions 195-256 (APSSPTLDCE…SARISALNIV (62 aa)) are interaction with KATNA1. S215 bears the Phosphoserine mark. Phosphothreonine; by CDK1 and MAPK1 is present on T219. S231 carries the phosphoserine modification. The interval 241 to 280 (TSPLTPSARISALNIVGDLLRKVGALESKLAACRNFAKDQ) is interaction with DISC1. Phosphoserine; by CDK1 is present on S242. Position 245 is a phosphothreonine; by CDK1 and MAPK1 (T245). Positions 256–291 (VGDLLRKVGALESKLAACRNFAKDQASRKSYISGNV) are required for localization to the centrosome and interaction with dynein, dynactin, tubulin gamma, PCM1 and PCNT. C273 carries S-palmitoyl cysteine; by ZDHHC2, ZDHHC3 and ZDHHC7 lipidation. Residues 315–345 (GAVNGFDPAPPPPGLGSSRPSSAPGMLPLSV) are disordered. Residues 329–339 (LGSSRPSSAPG) show a composition bias toward low complexity. A Phosphoserine modification is found at S344.

This sequence belongs to the nudE family. Self-associates. Interacts with DISC1, dynein, dynactin, tubulin gamma, KATNA1, KATNB1, microtubules, PAFAH1B1, PCM1, PCNT, and YWHAE. Interacts directly with NEFL and indirectly with NEFH. Interacts (via C-terminus) with CENPF. Interacts with ZNF365. Interacts with PLEKHM1 (via N- and C-terminus). Interacts with GTP-bound RAB9A; the interaction may lead to RAB9A-dynein motor tethering. Phosphorylated in mitosis. Can be phosphorylated by CDK1, CDK5 and MAPK1. Phosphorylation by CDK5 promotes interaction with KATNA1 and YWHAE. Post-translationally, palmitoylation at Cys-273 reduces affinity for dynein.

Its subcellular location is the cytoplasm. It is found in the cytoskeleton. It localises to the microtubule organizing center. The protein resides in the centrosome. The protein localises to the chromosome. Its subcellular location is the centromere. It is found in the kinetochore. It localises to the spindle. Its function is as follows. Required for organization of the cellular microtubule array and microtubule anchoring at the centrosome. May regulate microtubule organization at least in part by targeting the microtubule severing protein KATNA1 to the centrosome. Also positively regulates the activity of the minus-end directed microtubule motor protein dynein. May enhance dynein-mediated microtubule sliding by targeting dynein to the microtubule plus ends. Required for several dynein- and microtubule-dependent processes such as the maintenance of Golgi integrity, the centripetal motion of secretory vesicles and the coupling of the nucleus and centrosome. Also required during brain development for the migration of newly formed neurons from the ventricular/subventricular zone toward the cortical plate. Plays a role, together with DISC1, in the regulation of neurite outgrowth. Required for mitosis in some cell types but appears to be dispensible for mitosis in cortical neuronal progenitors, which instead requires NDE1. Facilitates the polymerization of neurofilaments from the individual subunits NEFH and NEFL. Positively regulates lysosome peripheral distribution and ruffled border formation in osteoclasts. Plays a role, together with DISC1, in the regulation of neurite outgrowth. May act as a RAB9A/B effector that tethers RAB9-associated late endosomes to the dynein motor for their retrograde transport to the trans-Golgi network. The chain is Nuclear distribution protein nudE-like 1 (NDEL1) from Pongo abelii (Sumatran orangutan).